The chain runs to 391 residues: Leucine-rich repeat-containing protein 74B (391 aa).

Residues 1 to 38 are disordered; sequence MKGPCEVQKNEDQEGEAAATGPQAETLEAERSWTADSH. A compositionally biased stretch (basic and acidic residues) spans 28-38; that stretch reads EAERSWTADSH. 9 LRR repeats span residues 106 to 126, 134 to 154, 162 to 182, 190 to 211, 218 to 239, 246 to 259, 274 to 294, 302 to 323, and 332 to 354; these read YIKR…EALA, IISD…QAIC, TVEK…QHLA, GLKS…ILGP, GLTE…AFAR, FLKV…GFGD, VLEE…LKLG, TLRI…GLLK, and ALEL…ASSM. The interval 371–391 is disordered; that stretch reads KDWPQASTPSQPASAPSDSGL. Positions 374–391 are enriched in low complexity; the sequence is PQASTPSQPASAPSDSGL.

The chain is Leucine-rich repeat-containing protein 74B from Mus musculus (Mouse).